Reading from the N-terminus, the 558-residue chain is Dihydroxy-acid dehydratase (558 aa).

Cysteine 54 is a binding site for [2Fe-2S] cluster. Residue aspartate 86 participates in Mg(2+) binding. [2Fe-2S] cluster is bound at residue cysteine 127. Mg(2+) contacts are provided by aspartate 128 and lysine 129. Residue lysine 129 is modified to N6-carboxylysine. Cysteine 199 is a [2Fe-2S] cluster binding site. Glutamate 448 serves as a coordination point for Mg(2+). Serine 474 acts as the Proton acceptor in catalysis.

This sequence belongs to the IlvD/Edd family. In terms of assembly, homodimer. [2Fe-2S] cluster is required as a cofactor. The cofactor is Mg(2+).

It catalyses the reaction (2R)-2,3-dihydroxy-3-methylbutanoate = 3-methyl-2-oxobutanoate + H2O. It carries out the reaction (2R,3R)-2,3-dihydroxy-3-methylpentanoate = (S)-3-methyl-2-oxopentanoate + H2O. The protein operates within amino-acid biosynthesis; L-isoleucine biosynthesis; L-isoleucine from 2-oxobutanoate: step 3/4. Its pathway is amino-acid biosynthesis; L-valine biosynthesis; L-valine from pyruvate: step 3/4. Its function is as follows. Functions in the biosynthesis of branched-chain amino acids. Catalyzes the dehydration of (2R,3R)-2,3-dihydroxy-3-methylpentanoate (2,3-dihydroxy-3-methylvalerate) into 2-oxo-3-methylpentanoate (2-oxo-3-methylvalerate) and of (2R)-2,3-dihydroxy-3-methylbutanoate (2,3-dihydroxyisovalerate) into 2-oxo-3-methylbutanoate (2-oxoisovalerate), the penultimate precursor to L-isoleucine and L-valine, respectively. This Acidothermus cellulolyticus (strain ATCC 43068 / DSM 8971 / 11B) protein is Dihydroxy-acid dehydratase.